Consider the following 183-residue polypeptide: Apo-citrate lyase phosphoribosyl-dephospho-CoA transferase (183 aa).

It belongs to the CitX family.

The enzyme catalyses apo-[citrate lyase ACP] + 2'-(5''-triphospho-alpha-D-ribosyl)-3'-dephospho-CoA = holo-[citrate lyase ACP] + diphosphate. In terms of biological role, transfers 2-(5''-triphosphoribosyl)-3'-dephosphocoenzyme-A on a serine residue to the apo-acyl carrier protein (gamma chain) of the citrate lyase to yield holo-acyl carrier protein. The protein is Apo-citrate lyase phosphoribosyl-dephospho-CoA transferase of Escherichia coli O6:K15:H31 (strain 536 / UPEC).